Consider the following 205-residue polypeptide: Holliday junction branch migration complex subunit RuvA (205 aa).

The domain I stretch occupies residues 1-64 (MIGRLRGVLV…EDAQLLYGFI (64 aa)). A domain II region spans residues 65–143 (TKQERALFRL…SLMEASAGSE (79 aa)). Positions 144-156 (REFVLQSNYSPTP) are flexible linker. Residues 157–205 (TVNSAEEDAISALISLGYKPPQASKSVSAAYKEGMDSETLIKAALKSML) are domain III.

The protein belongs to the RuvA family. Homotetramer. Forms an RuvA(8)-RuvB(12)-Holliday junction (HJ) complex. HJ DNA is sandwiched between 2 RuvA tetramers; dsDNA enters through RuvA and exits via RuvB. An RuvB hexamer assembles on each DNA strand where it exits the tetramer. Each RuvB hexamer is contacted by two RuvA subunits (via domain III) on 2 adjacent RuvB subunits; this complex drives branch migration. In the full resolvosome a probable DNA-RuvA(4)-RuvB(12)-RuvC(2) complex forms which resolves the HJ.

It is found in the cytoplasm. Functionally, the RuvA-RuvB-RuvC complex processes Holliday junction (HJ) DNA during genetic recombination and DNA repair, while the RuvA-RuvB complex plays an important role in the rescue of blocked DNA replication forks via replication fork reversal (RFR). RuvA specifically binds to HJ cruciform DNA, conferring on it an open structure. The RuvB hexamer acts as an ATP-dependent pump, pulling dsDNA into and through the RuvAB complex. HJ branch migration allows RuvC to scan DNA until it finds its consensus sequence, where it cleaves and resolves the cruciform DNA. The protein is Holliday junction branch migration complex subunit RuvA of Shewanella sp. (strain W3-18-1).